We begin with the raw amino-acid sequence, 338 residues long: tRNA-cytidine(32) 2-sulfurtransferase (338 aa).

The PP-loop motif motif lies at 86–91 (SGGKDS). Positions 161, 164, and 252 each coordinate [4Fe-4S] cluster.

The protein belongs to the TtcA family. In terms of assembly, homodimer. It depends on Mg(2+) as a cofactor. [4Fe-4S] cluster serves as cofactor.

It localises to the cytoplasm. It carries out the reaction cytidine(32) in tRNA + S-sulfanyl-L-cysteinyl-[cysteine desulfurase] + AH2 + ATP = 2-thiocytidine(32) in tRNA + L-cysteinyl-[cysteine desulfurase] + A + AMP + diphosphate + H(+). Its pathway is tRNA modification. In terms of biological role, catalyzes the ATP-dependent 2-thiolation of cytidine in position 32 of tRNA, to form 2-thiocytidine (s(2)C32). The sulfur atoms are provided by the cysteine/cysteine desulfurase (IscS) system. The chain is tRNA-cytidine(32) 2-sulfurtransferase from Albidiferax ferrireducens (strain ATCC BAA-621 / DSM 15236 / T118) (Rhodoferax ferrireducens).